Reading from the N-terminus, the 287-residue chain is ATP synthase gamma chain (287 aa).

It belongs to the ATPase gamma chain family. F-type ATPases have 2 components, CF(1) - the catalytic core - and CF(0) - the membrane proton channel. CF(1) has five subunits: alpha(3), beta(3), gamma(1), delta(1), epsilon(1). CF(0) has three main subunits: a, b and c.

The protein localises to the cell inner membrane. Its function is as follows. Produces ATP from ADP in the presence of a proton gradient across the membrane. The gamma chain is believed to be important in regulating ATPase activity and the flow of protons through the CF(0) complex. The protein is ATP synthase gamma chain of Colwellia psychrerythraea (strain 34H / ATCC BAA-681) (Vibrio psychroerythus).